The chain runs to 556 residues: Formate--tetrahydrofolate ligase (556 aa).

65-72 (TPAGEGKS) serves as a coordination point for ATP.

The protein belongs to the formate--tetrahydrofolate ligase family.

It carries out the reaction (6S)-5,6,7,8-tetrahydrofolate + formate + ATP = (6R)-10-formyltetrahydrofolate + ADP + phosphate. The protein operates within one-carbon metabolism; tetrahydrofolate interconversion. The polypeptide is Formate--tetrahydrofolate ligase (Streptococcus pneumoniae (strain ATCC 700669 / Spain 23F-1)).